Here is a 602-residue protein sequence, read N- to C-terminus: Probable beta-glucosidase btgE (602 aa).

An N-terminal signal peptide occupies residues 1–18; the sequence is MRGAFLAAAAAVAGTAMA. Disordered regions lie at residues 61 to 94 and 116 to 166; these read PPTL…SVVT and GVDA…TSFS. Residues 74-94 are compositionally biased toward low complexity; it reads PSSSSSSEVPSVPSSESSVVT. Positions 152-166 are enriched in polar residues; it reads TSESPLPTPGVTSFS. Glu443 functions as the Proton donor in the catalytic mechanism. Glu538 (nucleophile) is an active-site residue.

Belongs to the glycosyl hydrolase 17 family.

The protein resides in the secreted. It is found in the cell wall. It catalyses the reaction Hydrolysis of terminal, non-reducing beta-D-glucosyl residues with release of beta-D-glucose.. It functions in the pathway glycan metabolism; cellulose degradation. Beta-glucosidases are one of a number of cellulolytic enzymes involved in the degradation of cellulosic biomass. Catalyzes the last step releasing glucose from the inhibitory cellobiose. The chain is Probable beta-glucosidase btgE (btgE) from Aspergillus flavus (strain ATCC 200026 / FGSC A1120 / IAM 13836 / NRRL 3357 / JCM 12722 / SRRC 167).